The primary structure comprises 164 residues: MAFKDNAVEIEERVVAINRVTKVVKGGRRLRFAALVVVGDRNGRVGFGTGKAQEVPEAIRKAVESAKKNMIEVPMVGTTIPHEVRSEFGGARVLLKPASEGSGVAAGGATRAVIELAGIADVTSKSLGSNTPINIVRATVEGLKQLKRAEEVAALRGISVSDLA.

One can recognise an S5 DRBM domain in the interval 10–73; it reads IEERVVAINR…ESAKKNMIEV (64 aa).

The protein belongs to the universal ribosomal protein uS5 family. In terms of assembly, part of the 30S ribosomal subunit. Contacts proteins S4 and S8.

Its function is as follows. With S4 and S12 plays an important role in translational accuracy. In terms of biological role, located at the back of the 30S subunit body where it stabilizes the conformation of the head with respect to the body. This is Small ribosomal subunit protein uS5 from Streptococcus suis (strain 98HAH33).